A 501-amino-acid chain; its full sequence is G protein-activated inward rectifier potassium channel 1 (501 aa).

Positions 1–40 (MSALRRKFGDDYQVVTTSSSGSGLQPQGPGQGPQQQLVPK) are disordered. Residues 1–80 (MSALRRKFGD…LFTTLVDLKW (80 aa)) lie on the Cytoplasmic side of the membrane. Positions 18-37 (SSSGSGLQPQGPGQGPQQQL) are enriched in low complexity. Residues 81–105 (RWNLFIFILTYTVAWLFMASMWWVI) traverse the membrane as a helical segment. At 106-129 (AYTRGDLNKAHVGNYTPCVANVYN) the chain is on the extracellular side. N119 carries an N-linked (GlcNAc...) asparagine glycan. The helical; Pore-forming intramembrane region spans 130 to 141 (FPSAFLFFIETE). The pore-forming intramembrane region spans 142–148 (ATIGYGY). The Selectivity filter motif lies at 143–148 (TIGYGY). Residues 149 to 157 (RYITDKCPE) lie on the Extracellular side of the membrane. The chain crosses the membrane as a helical span at residues 158 to 179 (GIILFLFQSILGSIVDAFLIGC). Residues 180-501 (MFIKMSQPKK…LRKMNSDRFT (322 aa)) lie on the Cytoplasmic side of the membrane. Positions 182–209 (IKMSQPKKRAETLMFSEHAVISMRDGKL) are polyphosphoinositide (PIP2)-binding. Phosphoserine is present on residues S385 and S424. The span at 456 to 467 (TKMLSDPMSQSV) shows a compositional bias: polar residues. Positions 456-501 (TKMLSDPMSQSVADLPPKLQKMAGGPTRMEGNLPAKLRKMNSDRFT) are disordered.

The protein belongs to the inward rectifier-type potassium channel (TC 1.A.2.1) family. KCNJ3 subfamily. In terms of assembly, associates with KCNJ5/GIRK4 or KCNJ6/GIRK2 to form a G-protein activated heteromultimer pore-forming unit. The resulting inward current is much larger. Associates with KCNJ9/GIRK3 to form a G-protein activated heteromultimer pore-forming unit.

Its subcellular location is the membrane. The enzyme catalyses K(+)(in) = K(+)(out). Its activity is regulated as follows. Heteromultimer composed of KCNJ3/GIRK1 and KCNJ5/GIRK4 is activated by phosphatidylinositol 4,5 biphosphate (PtdIns(4,5)P2). Functionally, inward rectifier potassium channels are characterized by a greater tendency to allow potassium to flow into the cell rather than out of it. Their voltage dependence is regulated by the concentration of extracellular potassium; as external potassium is raised, the voltage range of the channel opening shifts to more positive voltages. The inward rectification is mainly due to the blockage of outward current by internal magnesium. This potassium channel is controlled by G proteins. This receptor plays a crucial role in regulating the heartbeat. Forms a functional channel in association with KCNJ9/GIRK3. In Rattus norvegicus (Rat), this protein is G protein-activated inward rectifier potassium channel 1 (Kcnj3).